The following is a 370-amino-acid chain: Metalloproteinase (370 aa).

Positions 1-15 are cleaved as a signal peptide; the sequence is MYLAYIFFLFATVSA. Residues 170 to 370 enclose the Peptidase M12B domain; the sequence is IVIEVLLVTD…DNYGKIFRMF (201 aa). N226 carries N-linked (GalNAc...) asparagine glycosylation. H320 is a binding site for Zn(2+). Residue E321 is part of the active site. Zn(2+) contacts are provided by H324 and H330.

The protein belongs to the venom metalloproteinase (M12B) family. As to expression, expressed by the venom gland.

It is found in the secreted. Its function is as follows. Metalloprotease that may disrupt the cell matrix and the process of clotting blood or hemolymph. The chain is Metalloproteinase from Tityus obscurus (Amazonian scorpion).